The sequence spans 204 residues: Casparian strip membrane protein 2 (204 aa).

The Cytoplasmic segment spans residues 1–42 (MKNESTFIDVPAESSSAMKGKAPLIGVARDHTTSGSGGYNRG). A helical membrane pass occupies residues 43-63 (LAIFDFLLRLAAIVAALAAAA). At 64–92 (TMGTSDETLPFFTQFLQFEASYDDLPTFQ) the chain is on the extracellular side. A helical membrane pass occupies residues 93–113 (FFVIAMALVGGYLVLSLPISV). Over 114-125 (VTILRPLATAPR) the chain is Cytoplasmic. The helical transmembrane segment at 126–146 (LLLLVLDTGVLALNTAAASSA) threads the bilayer. Residues 147–178 (AAISYLAHSGNQNTNWLPICQQFGDFCQKSSG) lie on the Extracellular side of the membrane. A helical membrane pass occupies residues 179–199 (AVVSAFVSVVFFTILVVISGV). Residues 200-204 (ALKRH) are Cytoplasmic-facing.

Belongs to the Casparian strip membrane proteins (CASP) family. As to quaternary structure, homodimer and heterodimers with other CASP proteins. Interacts with CASP1, CASP3 and CASP4.

It is found in the cell membrane. Functionally, regulates membrane-cell wall junctions and localized cell wall deposition. Required for establishment of the Casparian strip membrane domain (CSD) and the subsequent formation of Casparian strips, a cell wall modification of the root endodermis that determines an apoplastic barrier between the intraorganismal apoplasm and the extraorganismal apoplasm and prevents lateral diffusion. The polypeptide is Casparian strip membrane protein 2 (CASP2) (Arabidopsis thaliana (Mouse-ear cress)).